We begin with the raw amino-acid sequence, 458 residues long: Transmembrane protein 135 (458 aa).

6 consecutive transmembrane segments (helical) span residues 68–88 (ILQSASFLTANGALFMAFFCI), 96–116 (FYLWSPGFGAALPASYVAILV), 149–169 (TLRNGEVLLFCITAAMYMFFF), 298–318 (FQLGAFLGSFVSIYKGTSCFL), 331–351 (IIAGFLAGVSMMFYKSTTISM), and 380–400 (IIYSISTAICFQAAVMEVQTL).

This sequence belongs to the TMEM135 family.

The protein resides in the mitochondrion membrane. Its subcellular location is the peroxisome membrane. Involved in mitochondrial metabolism by regulating the balance between mitochondrial fusion and fission. May act as a regulator of mitochondrial fission that promotes DNM1L-dependent fission through activation of DNM1L. May be involved in peroxisome organization. The sequence is that of Transmembrane protein 135 from Bos taurus (Bovine).